Reading from the N-terminus, the 110-residue chain is Small ribosomal subunit protein uS17 (110 aa).

This sequence belongs to the universal ribosomal protein uS17 family. Part of the 30S ribosomal subunit.

Its function is as follows. One of the primary rRNA binding proteins, it binds specifically to the 5'-end of 16S ribosomal RNA. The chain is Small ribosomal subunit protein uS17 from Petrotoga mobilis (strain DSM 10674 / SJ95).